The primary structure comprises 441 residues: GTPase Der (441 aa).

EngA-type G domains follow at residues 4–169 (PVVA…PEDI) and 178–353 (IKVA…DQAA). Residues 10 to 17 (GRPNVGKS), 57 to 61 (DTGGI), 120 to 123 (NKVD), 184 to 191 (GKPNAGKS), 231 to 235 (DTAGI), and 296 to 299 (NKWD) contribute to the GTP site. The region spanning 354–438 (FRISTGMLND…PIRFIHRQRE (85 aa)) is the KH-like domain.

The protein belongs to the TRAFAC class TrmE-Era-EngA-EngB-Septin-like GTPase superfamily. EngA (Der) GTPase family. As to quaternary structure, associates with the 50S ribosomal subunit.

Its function is as follows. GTPase that plays an essential role in the late steps of ribosome biogenesis. This is GTPase Der from Ruminiclostridium cellulolyticum (strain ATCC 35319 / DSM 5812 / JCM 6584 / H10) (Clostridium cellulolyticum).